Here is a 218-residue protein sequence, read N- to C-terminus: Redox-sensing transcriptional repressor Rex (218 aa).

Positions 25-64 (WYLSYVQLLHADGCESVSSTRIARAVGVDASLVAKDLSYV) form a DNA-binding region, H-T-H motif. 99–104 (GVGSLG) contacts NAD(+).

Belongs to the transcriptional regulatory Rex family. Homodimer.

The protein localises to the cytoplasm. In terms of biological role, modulates transcription in response to changes in cellular NADH/NAD(+) redox state. This chain is Redox-sensing transcriptional repressor Rex, found in Porphyromonas gingivalis (strain ATCC BAA-308 / W83).